Reading from the N-terminus, the 152-residue chain is MASSLNEDPEGSRITYVKGDLFACPKTDSLAHCISEDCRMGAGIAVLFKKKFGGVQELLNQQKKSGEVAVLKRDGRYIYYLITKKRASHKPTYENLQKSLEAMKSHCLKNGVTDLSMPRIGCGLDRLQWENVSAMIEEVFEATDIKITVYTL.

The residue at position 2 (Ala2) is an N-acetylalanine. The 151-residue stretch at 2–152 folds into the Macro domain; sequence ASSLNEDPEG…TDIKITVYTL (151 aa). Position 4 is a phosphoserine (Ser4). A substrate-binding site is contributed by Leu21. Lys84 serves as the catalytic Nucleophile. Substrate contacts are provided by residues 119 to 125 and Leu152; that span reads RIGCGLD. Catalysis depends on Asp125, which acts as the Proton acceptor.

Ubiquitous.

The protein resides in the nucleus. Its subcellular location is the nucleoplasm. It localises to the nucleolus. It is found in the chromosome. The catalysed reaction is 2''-O-acetyl-ADP-D-ribose + H2O = ADP-D-ribose + acetate + H(+). It catalyses the reaction 5-O-(ADP-D-ribosyl)-L-glutamyl-[protein] + H2O = L-glutamyl-[protein] + ADP-D-ribose + H(+). The enzyme catalyses alpha-NAD(+) + H2O = ADP-D-ribose + nicotinamide + H(+). Subject to competitive inhibition by the product ADP-ribose. In terms of biological role, ADP-ribose glycohydrolase that hydrolyzes ADP-ribose and acts on different substrates, such as proteins ADP-ribosylated on glutamate and O-acetyl-ADP-D-ribose. Specifically acts as a glutamate mono-ADP-ribosylhydrolase by mediating the removal of mono-ADP-ribose attached to glutamate residues on proteins. Does not act on poly-ADP-ribosylated proteins: the poly-ADP-ribose chain of poly-ADP-ribosylated glutamate residues must by hydrolyzed into mono-ADP-ribosylated glutamate by PARG to become a substrate for OARD1. Deacetylates O-acetyl-ADP ribose, a signaling molecule generated by the deacetylation of acetylated lysine residues in histones and other proteins. Catalyzes the deacylation of O-acetyl-ADP-ribose, O-propionyl-ADP-ribose and O-butyryl-ADP-ribose, yielding ADP-ribose plus acetate, propionate and butyrate, respectively. The sequence is that of ADP-ribose glycohydrolase OARD1 from Homo sapiens (Human).